A 735-amino-acid polypeptide reads, in one-letter code: Photosystem I P700 chlorophyll a apoprotein A2 (735 aa).

The next 8 membrane-spanning stretches (helical) occupy residues 46 to 69 (IFAS…FYVS), 135 to 158 (LSTA…IHGY), 176 to 200 (LNHH…HVAI), 274 to 292 (IAHH…GHMY), 329 to 352 (LNLQ…QHMY), 368 to 394 (AALY…IFLV), 416 to 438 (VIIS…LYVH), and 521 to 539 (FLVH…LILV). C563 and C572 together coordinate [4Fe-4S] cluster. 2 helical membrane passes run 579 to 600 (AFYL…YWHW) and 647 to 669 (LSVW…MFLI). Chlorophyll a-binding residues include H658, M666, and Y674. W675 lines the phylloquinone pocket. The chain crosses the membrane as a helical span at residues 708-728 (FVGLIHFTVGYILTYAAFLIA).

This sequence belongs to the PsaA/PsaB family. In terms of assembly, the PsaA/B heterodimer binds the P700 chlorophyll special pair and subsequent electron acceptors. PSI consists of a core antenna complex that captures photons, and an electron transfer chain that converts photonic excitation into a charge separation. The eukaryotic PSI reaction center is composed of at least 11 subunits. P700 is a chlorophyll a/chlorophyll a' dimer, A0 is one or more chlorophyll a, A1 is one or both phylloquinones and FX is a shared 4Fe-4S iron-sulfur center. serves as cofactor.

It is found in the plastid. It localises to the chloroplast thylakoid membrane. The catalysed reaction is reduced [plastocyanin] + hnu + oxidized [2Fe-2S]-[ferredoxin] = oxidized [plastocyanin] + reduced [2Fe-2S]-[ferredoxin]. Functionally, psaA and PsaB bind P700, the primary electron donor of photosystem I (PSI), as well as the electron acceptors A0, A1 and FX. PSI is a plastocyanin/cytochrome c6-ferredoxin oxidoreductase, converting photonic excitation into a charge separation, which transfers an electron from the donor P700 chlorophyll pair to the spectroscopically characterized acceptors A0, A1, FX, FA and FB in turn. Oxidized P700 is reduced on the lumenal side of the thylakoid membrane by plastocyanin or cytochrome c6. The protein is Photosystem I P700 chlorophyll a apoprotein A2 of Bigelowiella natans (Pedinomonas minutissima).